The primary structure comprises 199 residues: Large ribosomal subunit protein mL51 (199 aa).

Residues 1-15 (MNSASISRLTSVIRT) constitute a mitochondrion transit peptide.

The protein belongs to the mitochondrion-specific ribosomal protein mL51 family. In terms of assembly, component of the mitochondrial ribosome large subunit (39S) which comprises a 16S rRNA and about 50 distinct proteins.

Its subcellular location is the mitochondrion. The protein is Large ribosomal subunit protein mL51 (mrpl-51) of Caenorhabditis briggsae.